Consider the following 989-residue polypeptide: R3H domain-containing protein 2 (989 aa).

Disordered regions lie at residues 23–71 and 106–147; these read EESV…AKSN and SCPS…QEYT. The span at 36-56 shows a compositional bias: basic and acidic residues; sequence PSKEEIEKESEDTSLRQETQR. Phosphoserine is present on S37. The span at 58–71 shows a compositional bias: basic residues; that stretch reads TSNHGHARKRAKSN. Residues 109-143 are compositionally biased toward basic and acidic residues; that stretch reads SDKEEEKSTKDVSEKEDKDKNKEKVPRRMLSRDSS. At S143 the chain carries Phosphoserine. Residues 169–232 enclose the R3H domain; sequence RMMLLKLEQE…AVIINKTSNT (64 aa). In terms of domain architecture, SUZ spans 233 to 303; that stretch reads RIPEQRFSEH…VRERIFARET (71 aa). 7 disordered regions span residues 267–288, 306–390, 416–479, 493–524, 674–738, 751–793, and 848–867; these read DDNQ…EERE, NGYL…ISRP, TAQQ…FQPP, ASTG…GYMQ, GTSP…PSMV, RGQK…SLSN, and QGQS…LKSA. Residues 277–288 show a composition bias toward basic and acidic residues; the sequence is DGRRSKSIEERE. Residues 320 to 331 are compositionally biased toward low complexity; sequence SRTSSSRQSSTD. S344, S347, and S363 each carry phosphoserine. Residues 416–428 show a composition bias toward low complexity; sequence TAQQQQQQQQQLP. 2 stretches are compositionally biased toward polar residues: residues 454–466 and 493–517; these read PFGQ…QGST and ASTG…QQVL. The segment covering 695-704 has biased composition (pro residues); that stretch reads SPSPCSPPQM. A compositionally biased stretch (low complexity) spans 705 to 727; it reads PQQYSGVSPSGPGVVVMQLNVPN. The span at 761–771 shows a compositional bias: polar residues; sequence PESSPQANTQM. Low complexity predominate over residues 772–790; sequence SSSPVTSPTQSPAPSPVTS. 2 positions are modified to phosphoserine: S866 and S868. T869 and T873 each carry phosphothreonine.

It is found in the nucleus. This chain is R3H domain-containing protein 2 (R3HDM2), found in Bos taurus (Bovine).